The following is a 202-amino-acid chain: Putative pituitary tumor-transforming gene 3 protein (202 aa).

Residues 61–64 carry the D-box motif; sequence RKAL. The short motif at 163-173 is the SH3-binding element; that stretch reads PPSPLKMPSPP.

This sequence belongs to the securin family.

It is found in the cytoplasm. The protein localises to the nucleus. In Pan troglodytes (Chimpanzee), this protein is Putative pituitary tumor-transforming gene 3 protein (PTTG3).